A 388-amino-acid chain; its full sequence is Mannitol-1-phosphate 5-dehydrogenase (388 aa).

4 to 15 (AVHFGAGNIGRG) lines the NAD(+) pocket.

The protein belongs to the mannitol dehydrogenase family.

The catalysed reaction is D-mannitol 1-phosphate + NAD(+) = beta-D-fructose 6-phosphate + NADH + H(+). The sequence is that of Mannitol-1-phosphate 5-dehydrogenase from Lactococcus lactis subsp. cremoris (strain SK11).